A 266-amino-acid polypeptide reads, in one-letter code: Vesicle-associated protein 4-1 (266 aa).

Residues 28 to 57 form a disordered region; it reads STTSSSSTQNPNQNYRSRHGNRNTDISAVS. Positions 76–199 constitute an MSP domain; that stretch reads RLRLDPSSYL…VEQVLRVIFI (124 aa). Positions 200–228 form a coiled coil; the sequence is DADRPSAALEKLKRQLDEAEAAVEARKKP. Basic and acidic residues predominate over residues 219 to 229; it reads EAAVEARKKPP. The tract at residues 219 to 239 is disordered; the sequence is EAAVEARKKPPPETGPRVVGE. Ser264 bears the Phosphoserine mark.

This sequence belongs to the VAMP-associated protein (VAP) (TC 9.B.17) family.

Functionally, may play a role in vesicle trafficking. In Arabidopsis thaliana (Mouse-ear cress), this protein is Vesicle-associated protein 4-1 (PVA41).